Reading from the N-terminus, the 73-residue chain is MAFLKKSIFLALFLGMVSLSICEEEKRENEGEEEQEDDEQSEMKRGLWSTIKNVGKEAAIAAGKAALGALGEQ.

The first 22 residues, 1–22, serve as a signal peptide directing secretion; sequence MAFLKKSIFLALFLGMVSLSIC. Positions 23–43 are cleaved as a propeptide — removed in mature form; that stretch reads EEEKRENEGEEEQEDDEQSEM. The tract at residues 25–46 is disordered; sequence EKRENEGEEEQEDDEQSEMKRG. Positions 30–40 are enriched in acidic residues; that stretch reads EGEEEQEDDEQ. A Leucine amide modification is found at Leu70. A propeptide spans 72 to 73 (removed in mature form); the sequence is EQ.

In terms of tissue distribution, expressed by the skin glands.

The protein resides in the secreted. Has antiparasitic activity against trypomastigote form of T.cruzi (IC(50)=0.68 uM) in vitro but not against L.infantum. Probably acts by permeabilizing cell membranes. In vitro, shows no cytotoxicity against macrophages. Has antibacterial activity. The polypeptide is Dermaseptin-1 (Pithecopus nordestinus (Northeastern Brazilian leaf frog)).